The primary structure comprises 362 residues: Formate dehydrogenase (362 aa).

Positions 93 and 119 each coordinate substrate. NAD(+)-binding positions include 174 to 175 (RI), Asp-195, 230 to 234 (PLHAG), Thr-256, Asp-282, 311 to 314 (HYSG), and Ser-357.

Belongs to the D-isomer specific 2-hydroxyacid dehydrogenase family. FDH subfamily. In terms of assembly, homodimer.

Its subcellular location is the cytoplasm. The catalysed reaction is formate + NAD(+) = CO2 + NADH. Catalyzes the NAD(+)-dependent oxidation of formate to carbon dioxide. Formate oxidation is the final step in the methanol oxidation pathway in methylotrophic microorganisms. Has a role in the detoxification of exogenous formate in non-methylotrophic organisms. The protein is Formate dehydrogenase of Pichia angusta (Yeast).